A 273-amino-acid polypeptide reads, in one-letter code: 29 kDa ribonucleoprotein A, chloroplastic (273 aa).

The N-terminal 58 residues, 1–58 (MASSASSLHFLSLTPQTLPLPKPTSQTTSLSFFSLPPSSLNLSLSSSSSCFSSRFVRK), are a transit peptide targeting the chloroplast. In terms of domain architecture, RRM 1 spans 87-165 (LKIFVGNLPF…RALRVNSGPP (79 aa)). Residues 156–181 (RALRVNSGPPPEKRENSSFRGGSRGG) form a disordered region. The linker (Gly-rich) stretch occupies residues 166 to 187 (PEKRENSSFRGGSRGGGSFDSS). The RRM 2 domain occupies 188–266 (NRVYVGNLAW…RAIRVSPAEA (79 aa)).

The protein localises to the plastid. It localises to the chloroplast. In terms of biological role, could be involved in splicing and/or processing of chloroplast RNA's. This is 29 kDa ribonucleoprotein A, chloroplastic from Nicotiana sylvestris (Wood tobacco).